The primary structure comprises 280 residues: Ribosomal RNA small subunit methyltransferase A (280 aa).

H13, L15, G40, E61, D85, and N106 together coordinate S-adenosyl-L-methionine. Residues R258–Q280 are disordered.

The protein belongs to the class I-like SAM-binding methyltransferase superfamily. rRNA adenine N(6)-methyltransferase family. RsmA subfamily.

The protein resides in the cytoplasm. The catalysed reaction is adenosine(1518)/adenosine(1519) in 16S rRNA + 4 S-adenosyl-L-methionine = N(6)-dimethyladenosine(1518)/N(6)-dimethyladenosine(1519) in 16S rRNA + 4 S-adenosyl-L-homocysteine + 4 H(+). In terms of biological role, specifically dimethylates two adjacent adenosines (A1518 and A1519) in the loop of a conserved hairpin near the 3'-end of 16S rRNA in the 30S particle. May play a critical role in biogenesis of 30S subunits. The sequence is that of Ribosomal RNA small subunit methyltransferase A from Alcanivorax borkumensis (strain ATCC 700651 / DSM 11573 / NCIMB 13689 / SK2).